Consider the following 287-residue polypeptide: Nucleotide-binding protein Hhal_2130 (287 aa).

11-18 contributes to the ATP binding site; it reads GLSGSGKS. A GTP-binding site is contributed by 63–66; sequence DARN.

The protein belongs to the RapZ-like family.

Its function is as follows. Displays ATPase and GTPase activities. In Halorhodospira halophila (strain DSM 244 / SL1) (Ectothiorhodospira halophila (strain DSM 244 / SL1)), this protein is Nucleotide-binding protein Hhal_2130.